The following is a 677-amino-acid chain: Mitochondrial 15S rRNA processing factor ppr3 (677 aa).

Residues 1-43 constitute a mitochondrion transit peptide; it reads MFTEICGKLRTCIYKKVAFSRPLGCNLRQLPVFRDFHNSVSCL. PPR repeat units lie at residues 210–244, 245–279, 280–314, 317–351, 355–390, and 569–604; these read SVYL…QLKP, DNYT…KIEA, NTHV…SLQS, DDKT…PINP, SSRT…QWKP, and DIHV…SYLP.

This sequence belongs to the CCM1 family. Binds to mitochondrial small subunit 15S rRNA.

The protein resides in the mitochondrion. Its function is as follows. Regulates mitochondrial small subunit maturation by controlling 15S rRNA 5'-end processing. Localizes to the 5' precursor of the 15S rRNA in a position that is subsequently occupied by mS47 in the mature yeast mtSSU. Uses structure and sequence-specific RNA recognition, binding to a single-stranded region of the precursor and specifically recognizing bases -6 to -1. The exchange of Ccm1 for mS47 is coupled to the irreversible removal of precursor rRNA that is accompanied by conformational changes of the mitoribosomal proteins uS5m and mS26. These conformational changes signal completion of 5'-end rRNA processing through protection of the mature 5'-end of the 15S rRNA and stabilization of mS47. The removal of the 5' precursor together with the dissociation of Ccm1 may be catalyzed by the 5'-3' exoribonuclease Pet127. Involved in the specific removal of group I introns in mitochondrial encoded transcripts. In Schizosaccharomyces japonicus (strain yFS275 / FY16936) (Fission yeast), this protein is Mitochondrial 15S rRNA processing factor ppr3 (dmr1).